Here is a 679-residue protein sequence, read N- to C-terminus: MANSQRKILVTSALPYANGPIHLGHMLEYIQTDIWSRFQKLRGHECHYICADDAHGTPIMLKAQQMGIAPEEMIAQVQKEHEKDFADFNIQFDNFHSTHSDENRELASQVYIKLRDAGYIKTKTISQLFDPEKSMFLPDRFVKGTCPRCKSEDQYGDNCDNCGATYSTTDLIDPRSAVSGATPVMKDSEHFFFDLPAFEGMLKEWINSGSLQQEMANKLGEWFEQGLQQWDISRDAPYFGFEIPDAPGKFFYVWLDAPIGYMGSFKNLCNKRDDLNFDEFWSKDSTAEVYHFIGKDIVYFHSLFWPAMLEGAGLRKPTSVYAHGYVTVNGAKMSKSKGTFIKARTYLDNLDPEYLRYYYAAKLSSRIDDLDLNLEDFAQRVNSDLVGKLVNLASRTAGFISKRFGGKLAKIADTSLTTSFLAKQEIIANFYETREYGKAMREIMALADIANAYVADSAPWQLIKEEDKQEEAHQVCSNALNLFRILVTYLKPVLPKLAQDVEAFLQMELTWDNLDIDLAGHEIAKFKALMQRVEMKSIEAIIEASKENLQVTAEPEVKKEVKTPLEQDPILDEISFDDFAKIDLRIARIAKAEHVKEANKLLRLELDLGGETKQVFAGIKSAYAPEDLEGKLTVMVANLAPRQMRFGVSEGMVLAAGPGGKDLWIMEPHEGAQPGMKVK.

A 'HIGH' region motif is present at residues 15–25 (PYANGPIHLGH). Residues Cys146, Cys149, Cys159, and Cys162 each contribute to the Zn(2+) site. A 'KMSKS' region motif is present at residues 332-336 (KMSKS). Lys335 is an ATP binding site. A tRNA-binding domain is found at 578-679 (DFAKIDLRIA…EGAQPGMKVK (102 aa)).

Belongs to the class-I aminoacyl-tRNA synthetase family. MetG type 1 subfamily. As to quaternary structure, homodimer. Requires Zn(2+) as cofactor.

The protein resides in the cytoplasm. The catalysed reaction is tRNA(Met) + L-methionine + ATP = L-methionyl-tRNA(Met) + AMP + diphosphate. In terms of biological role, is required not only for elongation of protein synthesis but also for the initiation of all mRNA translation through initiator tRNA(fMet) aminoacylation. This chain is Methionine--tRNA ligase, found in Shewanella halifaxensis (strain HAW-EB4).